A 487-amino-acid chain; its full sequence is 2-aminomuconic semialdehyde dehydrogenase (487 aa).

Residue 209-215 coordinates NAD(+); sequence GTGPRVG. Glu253 acts as the Proton acceptor in catalysis. Catalysis depends on Cys287, which acts as the Nucleophile. Ser362 carries the post-translational modification Phosphoserine.

The protein belongs to the aldehyde dehydrogenase family. Highly expressed in adult kidney and liver. Detected at lower levels in fetal liver and kidney.

The protein localises to the cytoplasm. The catalysed reaction is 2-aminomuconate 6-semialdehyde + NAD(+) + H2O = (2Z,4E)-2-aminomuconate + NADH + 2 H(+). The protein operates within amino-acid degradation; L-kynurenine degradation. Functionally, catalyzes the NAD-dependent oxidation of 2-aminomuconic semialdehyde of the kynurenine metabolic pathway in L-tryptophan degradation. This is 2-aminomuconic semialdehyde dehydrogenase from Homo sapiens (Human).